Consider the following 382-residue polypeptide: RNA binding protein fox-1 homolog 1-like (382 aa).

2 disordered regions span residues 34-79 (QEAG…AAHP) and 94-148 (GPQH…QPKR). The segment covering 49–65 (YAPPPSYPPPGQAPPTP) has biased composition (pro residues). Polar residues predominate over residues 101–110 (ESITASNTDD). Positions 147–223 (KRLHVSNIPF…RKIEVNNATA (77 aa)) constitute an RRM domain.

As to expression, expressed during muscle development in adaxial cells, somites, cardiac precursors, finbuds and jaw muscle cells.

The protein resides in the nucleus. Its function is as follows. RNA-binding protein that regulates alternative splicing events by binding to 5'-GCAUG-3' elements. Regulates alternative splicing of tissue-specific exons. The protein is RNA binding protein fox-1 homolog 1-like (rbfox1l) of Danio rerio (Zebrafish).